The primary structure comprises 512 residues: Lysine--tRNA ligase (512 aa).

The Mg(2+) site is built by Glu-408 and Glu-415.

This sequence belongs to the class-II aminoacyl-tRNA synthetase family. As to quaternary structure, homodimer. Mg(2+) is required as a cofactor.

Its subcellular location is the cytoplasm. The catalysed reaction is tRNA(Lys) + L-lysine + ATP = L-lysyl-tRNA(Lys) + AMP + diphosphate. The sequence is that of Lysine--tRNA ligase from Prochlorococcus marinus (strain MIT 9312).